A 132-amino-acid chain; its full sequence is Transcriptional regulator MraZ (132 aa).

SpoVT-AbrB domains are found at residues 5 to 47 and 76 to 119; these read TYEH…SKDD and TVEI…SKNK.

It belongs to the MraZ family. Forms oligomers.

Its subcellular location is the cytoplasm. The protein localises to the nucleoid. This chain is Transcriptional regulator MraZ, found in Mycoplasma capricolum subsp. capricolum (strain California kid / ATCC 27343 / NCTC 10154).